Here is a 274-residue protein sequence, read N- to C-terminus: Triosephosphate isomerase (274 aa).

A substrate-binding site is contributed by 13–15 (NWK). Histidine 98 functions as the Electrophile in the catalytic mechanism. The active-site Proton acceptor is glutamate 170. The substrate site is built by glycine 176 and serine 216.

This sequence belongs to the triosephosphate isomerase family. Homodimer.

The protein localises to the cytoplasm. It carries out the reaction D-glyceraldehyde 3-phosphate = dihydroxyacetone phosphate. It functions in the pathway carbohydrate biosynthesis; gluconeogenesis. The protein operates within carbohydrate degradation; glycolysis; D-glyceraldehyde 3-phosphate from glycerone phosphate: step 1/1. Its function is as follows. Involved in the gluconeogenesis. Catalyzes stereospecifically the conversion of dihydroxyacetone phosphate (DHAP) to D-glyceraldehyde-3-phosphate (G3P). This Aster yellows witches'-broom phytoplasma (strain AYWB) protein is Triosephosphate isomerase.